An 827-amino-acid polypeptide reads, in one-letter code: Leucine--tRNA ligase (827 aa).

A 'HIGH' region motif is present at residues 42–52 (PYPSGNLHMGH). The 'KMSKS' region signature appears at 583 to 587 (KMSKS). Lysine 586 is an ATP binding site.

It belongs to the class-I aminoacyl-tRNA synthetase family.

It is found in the cytoplasm. The catalysed reaction is tRNA(Leu) + L-leucine + ATP = L-leucyl-tRNA(Leu) + AMP + diphosphate. The sequence is that of Leucine--tRNA ligase from Desulfitobacterium hafniense (strain DSM 10664 / DCB-2).